A 119-amino-acid chain; its full sequence is uncharacterized protein (119 aa).

A helical transmembrane segment spans residues 74-91; the sequence is LSVHFLLNVISAILSMLI.

The protein localises to the membrane. This is an uncharacterized protein from Schizosaccharomyces pombe (strain 972 / ATCC 24843) (Fission yeast).